A 288-amino-acid chain; its full sequence is Small ribosomal subunit protein uS3 (288 aa).

Residues 39–107 enclose the KH type-2 domain; sequence VREYLKAKLK…PVAVNIEEVR (69 aa). The interval 209 to 288 is disordered; that stretch reads GRNDLPAAET…AAAAADGKGE (80 aa). Over residues 219 to 238 the composition is skewed to basic and acidic residues; sequence PRPEEERRPRGPRRDGRPGD. Residues 277–288 are compositionally biased toward low complexity; it reads APAAAAADGKGE.

Belongs to the universal ribosomal protein uS3 family. In terms of assembly, part of the 30S ribosomal subunit. Forms a tight complex with proteins S10 and S14.

In terms of biological role, binds the lower part of the 30S subunit head. Binds mRNA in the 70S ribosome, positioning it for translation. The polypeptide is Small ribosomal subunit protein uS3 (Acidovorax sp. (strain JS42)).